A 366-amino-acid chain; its full sequence is Holliday junction branch migration complex subunit RuvB (366 aa).

The disordered stretch occupies residues 1 to 49 (MAIISSKKQPPEPNGQPNKRPESAPAAPKEKVLQPEAAIDEQGKQEESI). A large ATPase domain (RuvB-L) region spans residues 13 to 210 (PNGQPNKRPE…FGLIQKLRFY (198 aa)). ATP-binding positions include Ile49, Arg50, Gly91, Lys94, Thr95, Thr96, 157 to 159 (EDY), Arg200, Tyr210, and Arg247. Thr95 contacts Mg(2+). The small ATPAse domain (RuvB-S) stretch occupies residues 211–281 (EVDELSQIVL…IAAEALQLFQ (71 aa)). The tract at residues 284-366 (PCGLDWTDRR…TPPNEQLSLL (83 aa)) is head domain (RuvB-H). Residues Arg339 and Arg344 each contribute to the DNA site.

It belongs to the RuvB family. As to quaternary structure, homohexamer. Forms an RuvA(8)-RuvB(12)-Holliday junction (HJ) complex. HJ DNA is sandwiched between 2 RuvA tetramers; dsDNA enters through RuvA and exits via RuvB. An RuvB hexamer assembles on each DNA strand where it exits the tetramer. Each RuvB hexamer is contacted by two RuvA subunits (via domain III) on 2 adjacent RuvB subunits; this complex drives branch migration. In the full resolvosome a probable DNA-RuvA(4)-RuvB(12)-RuvC(2) complex forms which resolves the HJ.

It localises to the cytoplasm. The enzyme catalyses ATP + H2O = ADP + phosphate + H(+). Its function is as follows. The RuvA-RuvB-RuvC complex processes Holliday junction (HJ) DNA during genetic recombination and DNA repair, while the RuvA-RuvB complex plays an important role in the rescue of blocked DNA replication forks via replication fork reversal (RFR). RuvA specifically binds to HJ cruciform DNA, conferring on it an open structure. The RuvB hexamer acts as an ATP-dependent pump, pulling dsDNA into and through the RuvAB complex. RuvB forms 2 homohexamers on either side of HJ DNA bound by 1 or 2 RuvA tetramers; 4 subunits per hexamer contact DNA at a time. Coordinated motions by a converter formed by DNA-disengaged RuvB subunits stimulates ATP hydrolysis and nucleotide exchange. Immobilization of the converter enables RuvB to convert the ATP-contained energy into a lever motion, pulling 2 nucleotides of DNA out of the RuvA tetramer per ATP hydrolyzed, thus driving DNA branch migration. The RuvB motors rotate together with the DNA substrate, which together with the progressing nucleotide cycle form the mechanistic basis for DNA recombination by continuous HJ branch migration. Branch migration allows RuvC to scan DNA until it finds its consensus sequence, where it cleaves and resolves cruciform DNA. The protein is Holliday junction branch migration complex subunit RuvB of Trichormus variabilis (strain ATCC 29413 / PCC 7937) (Anabaena variabilis).